The chain runs to 473 residues: Chromosomal replication initiator protein DnaA (473 aa).

The interval 1-90 is domain I, interacts with DnaA modulators; sequence MSSSLWLQCL…KRVTAPKSET (90 aa). Residues 91–136 form a domain II region; that stretch reads IAPARTRTAADVAAESSAPAQLQARKPVHNIWRDEEPVAVDLNHRS. Residues 137–353 are domain III, AAA+ region; it reads NVNPKHKFNN…GALNRVIANA (217 aa). Residues Gly181, Gly183, Lys184, and Thr185 each contribute to the ATP site. The segment at 354-473 is domain IV, binds dsDNA; it reads NFTGRPITID…YSNLIRTLSS (120 aa).

This sequence belongs to the DnaA family. As to quaternary structure, oligomerizes as a right-handed, spiral filament on DNA at oriC.

The protein localises to the cytoplasm. Plays an essential role in the initiation and regulation of chromosomal replication. ATP-DnaA binds to the origin of replication (oriC) to initiate formation of the DNA replication initiation complex once per cell cycle. Binds the DnaA box (a 9 base pair repeat at the origin) and separates the double-stranded (ds)DNA. Forms a right-handed helical filament on oriC DNA; dsDNA binds to the exterior of the filament while single-stranded (ss)DNA is stabiized in the filament's interior. The ATP-DnaA-oriC complex binds and stabilizes one strand of the AT-rich DNA unwinding element (DUE), permitting loading of DNA polymerase. After initiation quickly degrades to an ADP-DnaA complex that is not apt for DNA replication. Binds acidic phospholipids. This is Chromosomal replication initiator protein DnaA from Vibrio atlanticus (strain LGP32) (Vibrio splendidus (strain Mel32)).